The primary structure comprises 119 residues: MIQKNAILDVADNSGARKVLCIGFLGGKKSATVGDVIVVSAKVAAPKGRVTKGKVYKAVIVRVKGPIRRLDGSIIRFSSNAVVLVNDQGDPLGTRVFGPVRKFPVGEFTKVMSLAVEVL.

It belongs to the universal ribosomal protein uL14 family. Part of the 50S ribosomal subunit. Forms a cluster with proteins L3 and L19. In the 70S ribosome, L14 and L19 interact and together make contacts with the 16S rRNA in bridges B5 and B8.

Binds to 23S rRNA. Forms part of two intersubunit bridges in the 70S ribosome. In Anaplasma phagocytophilum (strain HZ), this protein is Large ribosomal subunit protein uL14.